The chain runs to 469 residues: UDP-N-acetylmuramate--L-alanine ligase (469 aa).

113–119 (GTHGKTT) is an ATP binding site.

Belongs to the MurCDEF family.

The protein resides in the cytoplasm. It carries out the reaction UDP-N-acetyl-alpha-D-muramate + L-alanine + ATP = UDP-N-acetyl-alpha-D-muramoyl-L-alanine + ADP + phosphate + H(+). It participates in cell wall biogenesis; peptidoglycan biosynthesis. In terms of biological role, cell wall formation. The chain is UDP-N-acetylmuramate--L-alanine ligase from Neisseria meningitidis serogroup A / serotype 4A (strain DSM 15465 / Z2491).